Here is a 412-residue protein sequence, read N- to C-terminus: D-amino acid dehydrogenase 3 (412 aa).

Residue Ile-4 to Tyr-18 coordinates FAD.

This sequence belongs to the DadA oxidoreductase family. It depends on FAD as a cofactor.

The catalysed reaction is a D-alpha-amino acid + A + H2O = a 2-oxocarboxylate + AH2 + NH4(+). Functionally, oxidative deamination of D-amino acids. This is D-amino acid dehydrogenase 3 (dadA3) from Mesorhizobium japonicum (strain LMG 29417 / CECT 9101 / MAFF 303099) (Mesorhizobium loti (strain MAFF 303099)).